Reading from the N-terminus, the 178-residue chain is Large ribosomal subunit protein uL6 (178 aa).

It belongs to the universal ribosomal protein uL6 family. Part of the 50S ribosomal subunit.

Functionally, this protein binds to the 23S rRNA, and is important in its secondary structure. It is located near the subunit interface in the base of the L7/L12 stalk, and near the tRNA binding site of the peptidyltransferase center. This Ligilactobacillus salivarius (strain UCC118) (Lactobacillus salivarius) protein is Large ribosomal subunit protein uL6.